Reading from the N-terminus, the 418-residue chain is D-amino acid dehydrogenase (418 aa).

Position 3–17 (3–17 (VLVLGAGVAGVSSAW)) interacts with FAD.

This sequence belongs to the DadA oxidoreductase family. The cofactor is FAD.

It carries out the reaction a D-alpha-amino acid + A + H2O = a 2-oxocarboxylate + AH2 + NH4(+). It functions in the pathway amino-acid degradation; D-alanine degradation; NH(3) and pyruvate from D-alanine: step 1/1. In terms of biological role, oxidative deamination of D-amino acids. The sequence is that of D-amino acid dehydrogenase from Neisseria meningitidis serogroup C (strain 053442).